Here is a 2477-residue protein sequence, read N- to C-terminus: Non-reducing polyketide synthase mapC (2477 aa).

The tract at residues 14-269 is N-terminal acylcarrier protein transacylase domain (SAT); the sequence is LLFGPQCSEI…HQQTHREGIQ (256 aa). Residues 403-820 enclose the Ketosynthase family 3 (KS3) domain; the sequence is MPPIAITGMA…GSNAALIVRD (418 aa). Residues Cys568, His703, and His742 each act as for beta-ketoacyl synthase activity in the active site. Residues 930-1233 are malonyl-CoA:ACP transacylase (MAT) domain; it reads LCFGGQNGVT…HRVNLDGSDG (304 aa). Ser1017 acts as the For acyl/malonyl transferase activity in catalysis. The tract at residues 1302 to 1435 is N-terminal hotdog fold; the sequence is QERAGLLRKL…GSVSLCNERS (134 aa). In terms of domain architecture, PKS/mFAS DH spans 1302–1612; it reads QERAGLLRKL…FMSVSIRSLT (311 aa). Residues 1307–1611 form a product template (PT) domain region; sequence LLRKLSDGPE…RFMSVSIRSL (305 aa). The active-site Proton acceptor; for dehydratase activity is the His1336. The interval 1461–1612 is C-terminal hotdog fold; the sequence is ASNGLKGSTV…FMSVSIRSLT (152 aa). The Proton donor; for dehydratase activity role is filled by Asp1518. Residues 1651 to 1725 enclose the Carrier domain; the sequence is DSDLVAVQEM…GLTEHIFPGH (75 aa). The residue at position 1685 (Ser1685) is an O-(pantetheine 4'-phosphoryl)serine. Positions 1882-2117 are methyltransferase (CMeT) domain; it reads PYALEHDLLQ…GFEWVGWTNN (236 aa). Active-site for thioesterase activity residues include Ser2267 and Asp2421.

It localises to the cytoplasm. Its subcellular location is the cytosol. The enzyme catalyses 3 malonyl-CoA + acetyl-CoA + S-adenosyl-L-methionine + H(+) = 5-methylorsellinate + S-adenosyl-L-homocysteine + 3 CO2 + 4 CoA. Its pathway is secondary metabolite biosynthesis; terpenoid biosynthesis. In terms of biological role, non-reducing polyketide synthase; part of the gene cluster that mediates the biosynthesis of mycophenolic acid (MPA), the first isolated antibiotic natural product in the world obtained from a culture of Penicillium brevicompactum in 1893. MpaC catalyzes the synthesis of 5-methylorsellinic acid (5MOA) via the condensation of 1 acetyl-CoA starter unit with 3 malonyl-CoA units and one methylation step. The first step of the pathway is the synthesis of 5-methylorsellinic acid (5MOA) by the cytosolic polyketide synthase mpaC. 5MOA is then converted to the phthalide compound 5,7-dihydroxy-4,6-dimethylphthalide (DHMP) by the endoplasmic reticulum-bound cytochrome P450 monooxygenase mpaDE. MpaDE first catalyzes hydroxylation of 5-MOA to 4,6-dihydroxy-2-(hydroxymethyl)-3-methylbenzoic acid (DHMB). MpaDE then acts as a lactone synthase that catalyzes the ring closure to convert DHMB into DHMP. The next step is the prenylation of DHMP by the Golgi apparatus-associated prenyltransferase mpaA to yield farnesyl-DHMP (FDHMP). The ER-bound oxygenase mpaB then mediates the oxidative cleavage the C19-C20 double bond in FDHMP to yield FDHMP-3C via a mycophenolic aldehyde intermediate. The O-methyltransferase mpaG catalyzes the methylation of FDHMP-3C to yield MFDHMP-3C. After the cytosolic methylation of FDHMP-3C, MFDHMP-3C enters into peroxisomes probably via free diffusion due to its low molecular weight. Upon a peroxisomal CoA ligation reaction, catalyzed by a beta-oxidation component enzyme acyl-CoA ligase ACL891, MFDHMP-3C-CoA would then be restricted to peroxisomes for the following beta-oxidation pathway steps. The peroxisomal beta-oxidation machinery than converts MFDHMP-3C-CoA into MPA_CoA, via a beta-oxidation chain-shortening process. Finally mpaH acts as a peroxisomal acyl-CoA hydrolase with high substrate specificity toward MPA-CoA to release the final product MPA. In Penicillium roqueforti (strain FM164), this protein is Non-reducing polyketide synthase mapC.